The sequence spans 267 residues: Cilia- and flagella-associated protein 300 (267 aa).

This sequence belongs to the CFAP300 family. As to quaternary structure, interacts with DNAAF2. In terms of tissue distribution, expressed in the left-right organiser (LRO) node at 8.25 dpc.

It is found in the cytoplasm. The protein localises to the cytoskeleton. The protein resides in the cilium axoneme. Cilium- and flagellum-specific protein that plays a role in axonemal structure organization and motility. May play a role in outer and inner dynein arm assembly. This is Cilia- and flagella-associated protein 300 from Mus musculus (Mouse).